We begin with the raw amino-acid sequence, 20 residues long: Putative 18 kDa spermidine-binding protein (20 aa).

As to quaternary structure, dimer of 18 kDa and 60 kDa subunit.

The protein localises to the microsome membrane. The protein resides in the endoplasmic reticulum membrane. Functionally, may have spermidine-binding activity. The sequence is that of Putative 18 kDa spermidine-binding protein from Zea mays (Maize).